We begin with the raw amino-acid sequence, 410 residues long: Cysteine desulfurase IscS (410 aa).

Residues 80 to 81 (AT), asparagine 160, glutamine 188, and 208 to 210 (SGH) each bind pyridoxal 5'-phosphate. Lysine 211 is subject to N6-(pyridoxal phosphate)lysine. Residue threonine 248 coordinates pyridoxal 5'-phosphate. Cysteine 334 acts as the Cysteine persulfide intermediate in catalysis. Cysteine 334 serves as a coordination point for [2Fe-2S] cluster.

The protein belongs to the class-V pyridoxal-phosphate-dependent aminotransferase family. NifS/IscS subfamily. In terms of assembly, homodimer. Forms a heterotetramer with IscU, interacts with other sulfur acceptors. Pyridoxal 5'-phosphate serves as cofactor.

The protein localises to the cytoplasm. It carries out the reaction (sulfur carrier)-H + L-cysteine = (sulfur carrier)-SH + L-alanine. Its pathway is cofactor biosynthesis; iron-sulfur cluster biosynthesis. Functionally, master enzyme that delivers sulfur to a number of partners involved in Fe-S cluster assembly, tRNA modification or cofactor biosynthesis. Catalyzes the removal of elemental sulfur atoms from cysteine to produce alanine. Functions as a sulfur delivery protein for Fe-S cluster synthesis onto IscU, an Fe-S scaffold assembly protein, as well as other S acceptor proteins. This chain is Cysteine desulfurase IscS, found in Rickettsia bellii (strain OSU 85-389).